Reading from the N-terminus, the 262-residue chain is tRNA pseudouridine synthase A (262 aa).

Asp51 serves as the catalytic Nucleophile. Tyr109 lines the substrate pocket.

This sequence belongs to the tRNA pseudouridine synthase TruA family. Homodimer.

It carries out the reaction uridine(38/39/40) in tRNA = pseudouridine(38/39/40) in tRNA. Functionally, formation of pseudouridine at positions 38, 39 and 40 in the anticodon stem and loop of transfer RNAs. The sequence is that of tRNA pseudouridine synthase A from Dechloromonas aromatica (strain RCB).